Consider the following 317-residue polypeptide: Ferrochelatase (317 aa).

Residues His191 and Glu271 each coordinate Fe cation.

It belongs to the ferrochelatase family.

It is found in the cytoplasm. It catalyses the reaction heme b + 2 H(+) = protoporphyrin IX + Fe(2+). It functions in the pathway porphyrin-containing compound metabolism; protoheme biosynthesis; protoheme from protoporphyrin-IX: step 1/1. Its function is as follows. Catalyzes the ferrous insertion into protoporphyrin IX. The protein is Ferrochelatase of Thermus thermophilus (strain ATCC BAA-163 / DSM 7039 / HB27).